A 232-amino-acid chain; its full sequence is Triosephosphate isomerase (232 aa).

6 to 8 (NFK) provides a ligand contact to substrate. The active-site Electrophile is histidine 86. Glutamate 155 (proton acceptor) is an active-site residue. Substrate-binding residues include glycine 161 and serine 191.

Belongs to the triosephosphate isomerase family. Homodimer.

It localises to the cytoplasm. It carries out the reaction D-glyceraldehyde 3-phosphate = dihydroxyacetone phosphate. Its pathway is carbohydrate biosynthesis; gluconeogenesis. It functions in the pathway carbohydrate degradation; glycolysis; D-glyceraldehyde 3-phosphate from glycerone phosphate: step 1/1. In terms of biological role, involved in the gluconeogenesis. Catalyzes stereospecifically the conversion of dihydroxyacetone phosphate (DHAP) to D-glyceraldehyde-3-phosphate (G3P). In Nitratiruptor sp. (strain SB155-2), this protein is Triosephosphate isomerase.